The chain runs to 181 residues: Large ribosomal subunit protein uL5 (181 aa).

The protein belongs to the universal ribosomal protein uL5 family. Part of the 50S ribosomal subunit; part of the 5S rRNA/L5/L18/L25 subcomplex. Contacts the 5S rRNA and the P site tRNA. Forms a bridge to the 30S subunit in the 70S ribosome.

In terms of biological role, this is one of the proteins that bind and probably mediate the attachment of the 5S RNA into the large ribosomal subunit, where it forms part of the central protuberance. In the 70S ribosome it contacts protein S13 of the 30S subunit (bridge B1b), connecting the 2 subunits; this bridge is implicated in subunit movement. Contacts the P site tRNA; the 5S rRNA and some of its associated proteins might help stabilize positioning of ribosome-bound tRNAs. The chain is Large ribosomal subunit protein uL5 from Nitrosococcus oceani (strain ATCC 19707 / BCRC 17464 / JCM 30415 / NCIMB 11848 / C-107).